The following is a 302-amino-acid chain: Dehydrodolichyl diphosphate synthase 3 (302 aa).

Belongs to the UPP synthase family. Mg(2+) serves as cofactor.

It participates in protein modification; protein glycosylation. Catalyzes cis-prenyl chain elongation to produce the polyprenyl backbone of dolichol, a glycosyl carrier-lipid required for the biosynthesis of several classes of glycoprotein. The protein is Dehydrodolichyl diphosphate synthase 3 of Arabidopsis thaliana (Mouse-ear cress).